A 100-amino-acid polypeptide reads, in one-letter code: NADH-quinone oxidoreductase subunit K (100 aa).

3 consecutive transmembrane segments (helical) span residues 4–24, 28–48, and 60–80; these read LQHGLILAAILFVLGLTGLLI, LLFMLISLEIMINAAALAFVV, and VMYILAITLAAAEASIGLALL.

Belongs to the complex I subunit 4L family. NDH-1 is composed of 13 different subunits. Subunits NuoA, H, J, K, L, M, N constitute the membrane sector of the complex.

The protein resides in the cell inner membrane. It carries out the reaction a quinone + NADH + 5 H(+)(in) = a quinol + NAD(+) + 4 H(+)(out). In terms of biological role, NDH-1 shuttles electrons from NADH, via FMN and iron-sulfur (Fe-S) centers, to quinones in the respiratory chain. The immediate electron acceptor for the enzyme in this species is believed to be ubiquinone. Couples the redox reaction to proton translocation (for every two electrons transferred, four hydrogen ions are translocated across the cytoplasmic membrane), and thus conserves the redox energy in a proton gradient. This Pectobacterium carotovorum subsp. carotovorum (strain PC1) protein is NADH-quinone oxidoreductase subunit K.